Reading from the N-terminus, the 738-residue chain is Polyribonucleotide nucleotidyltransferase (738 aa).

2 residues coordinate Mg(2+): Asp528 and Asp534. In terms of domain architecture, KH spans 594–653 (PRVVRVKIPVQKIGELIGPKGKVINSIQDETGAEISIEDDGTVYIGSSQADSSEKAVAMV). The 73-residue stretch at 665–737 (GSQFLGTVVK…DRGKLCLVAV (73 aa)) folds into the S1 motif domain.

The protein belongs to the polyribonucleotide nucleotidyltransferase family. Mg(2+) is required as a cofactor.

Its subcellular location is the cytoplasm. The enzyme catalyses RNA(n+1) + phosphate = RNA(n) + a ribonucleoside 5'-diphosphate. In terms of biological role, involved in mRNA degradation. Catalyzes the phosphorolysis of single-stranded polyribonucleotides processively in the 3'- to 5'-direction. The chain is Polyribonucleotide nucleotidyltransferase from Tropheryma whipplei (strain Twist) (Whipple's bacillus).